The sequence spans 183 residues: Hypoxanthine-guanine phosphoribosyltransferase (183 aa).

Diphosphate-binding residues include R47 and G48. Mg(2+)-binding residues include E103 and D104. The Proton acceptor role is filled by D107. GMP contacts are provided by residues K134, 155–156 (FV), and D162. R168 is a binding site for diphosphate.

Belongs to the purine/pyrimidine phosphoribosyltransferase family. Mg(2+) is required as a cofactor.

It is found in the cytoplasm. The catalysed reaction is IMP + diphosphate = hypoxanthine + 5-phospho-alpha-D-ribose 1-diphosphate. It carries out the reaction GMP + diphosphate = guanine + 5-phospho-alpha-D-ribose 1-diphosphate. It participates in purine metabolism; IMP biosynthesis via salvage pathway; IMP from hypoxanthine: step 1/1. The protein operates within purine metabolism; GMP biosynthesis via salvage pathway; GMP from guanine: step 1/1. Purine salvage pathway enzyme that catalyzes the transfer of the ribosyl-5-phosphate group from 5-phospho-alpha-D-ribose 1-diphosphate (PRPP) to the N9 position of the 6-oxopurines hypoxanthine and guanine to form the corresponding ribonucleotides IMP (inosine 5'-monophosphate) and GMP (guanosine 5'-monophosphate), with the release of PPi. The polypeptide is Hypoxanthine-guanine phosphoribosyltransferase (hpt) (Lactococcus lactis subsp. lactis (strain IL1403) (Streptococcus lactis)).